The chain runs to 231 residues: MASTALEIVAFVVSISGWVLVSSTLPTDYWKVSTIDGTVITTATYFANLWKICVTDSTGVANCKEFPSMLALDGYIQACRGLMIAAVSLGFFGSIFALFGMKCTKVGGSDQAKAKIACLAGIVFILSGLCSMTGCSLYANKITTEFFDPLYMEQKYELGAALFIGWAGASLCIIGGVIFCFSISDNNKTPRMGYTYNGPTSAMSSRTKYQGGEGDFKTTGPSKQFDKNAYV.

Residues 1-21 (MASTALEIVAFVVSISGWVLV) traverse the membrane as a helical segment. Residues 22–80 (SSTLPTDYWKVSTIDGTVITTATYFANLWKICVTDSTGVANCKEFPSMLALDGYIQACR) lie on the Extracellular side of the membrane. The chain crosses the membrane as a helical span at residues 81-101 (GLMIAAVSLGFFGSIFALFGM). Over 102–115 (KCTKVGGSDQAKAK) the chain is Cytoplasmic. Residues 116 to 136 (IACLAGIVFILSGLCSMTGCS) traverse the membrane as a helical segment. The Extracellular portion of the chain corresponds to 137 to 160 (LYANKITTEFFDPLYMEQKYELGA). A helical transmembrane segment spans residues 161–181 (ALFIGWAGASLCIIGGVIFCF). Residues 182–231 (SISDNNKTPRMGYTYNGPTSAMSSRTKYQGGEGDFKTTGPSKQFDKNAYV) are Cytoplasmic-facing.

Belongs to the claudin family. Can form homodimers both in trans (interaction between CLDN10 molecules in opposing membranes) and in cis (interaction between CLDN10 molecules within one membrane). Interacts with CLDN19. In terms of tissue distribution, widely expressed, with highest expression detected in brain cortex, kidney and lung. In kidney, the expression is highest in medulla, with transcripts being detected in medullary thick ascending limb of Henle's loop (mTAL) and outer and inner medullary collecting ducts. Expressed in salivary glands and skin. Detected in kidney with transcripts being detected in PCT, mTAL and cortical collecting duct. Detected in uterus. Expressed in proximal tubules (at protein level). As to expression, only detected in kidney and uterus. In terms of tissue distribution, detected in kidney with transcripts being detected in PCT, mTAL and cortical collecting duct. Detected in uterus. Expressed in the inner ear where it is detected in organ of Corti, marginal cells of stria vascularis, Reissner's membrane and spiral limbus (at protein level).

The protein resides in the cell junction. The protein localises to the tight junction. It localises to the cell membrane. It is found in the endoplasmic reticulum. The catalysed reaction is Na(+)(in) = Na(+)(out). It carries out the reaction Li(+)(in) = Li(+)(out). It catalyses the reaction K(+)(in) = K(+)(out). The enzyme catalyses Rb(+)(in) = Rb(+)(out). The catalysed reaction is Cs(+)(in) = Cs(+)(out). It carries out the reaction NH4(+)(in) = NH4(+)(out). It catalyses the reaction methylamine(out) = methylamine(in). The enzyme catalyses Mg(2+)(in) = Mg(2+)(out). The catalysed reaction is Ca(2+)(in) = Ca(2+)(out). It carries out the reaction Sr(2+)(in) = Sr(2+)(out). It catalyses the reaction chloride(in) = chloride(out). The enzyme catalyses nitrate(in) = nitrate(out). In terms of biological role, forms paracellular channels: polymerizes in tight junction strands with cation- and anion-selective channels through the strands, conveying epithelial permeability in a process known as paracellular tight junction permeability. Its function is as follows. Forms cation-selective paracellular channels. In sweat glands and in the thick ascending limb (TAL) of Henle's loop in kidney, it controls paracellular sodium permeability which is essential for proper sweat production and renal function. Functionally, forms anion-selective paracellular channels. In renal proximal tubules, it conveys selective chloride over hydrogencarbonate anion permeability which is required for renal chloride reabsorption and salt homeostasis. The protein is Claudin-10 of Mus musculus (Mouse).